Consider the following 74-residue polypeptide: Mitochondrial import receptor subunit TOM6 homolog (74 aa).

A compositionally biased stretch (polar residues) spans 1–16 (MASSTVPVSAAGSANE). A disordered region spans residues 1-22 (MASSTVPVSAAGSANETPEIPD). Ala-2 carries the post-translational modification N-acetylalanine.

Belongs to the Tom6 family. In terms of assembly, forms part of the preprotein translocase complex of the outer mitochondrial membrane (TOM complex) which consists of at least 7 different proteins (TOMM5, TOMM6, TOMM7, TOMM20, TOMM22, TOMM40 and TOMM70).

The protein resides in the mitochondrion outer membrane. In Homo sapiens (Human), this protein is Mitochondrial import receptor subunit TOM6 homolog (TOMM6).